We begin with the raw amino-acid sequence, 159 residues long: MTLEELRGQDTVPESTARMQGAGKALHELLLSAQRQGCLTAGVYESAKVLNVDPDNVTFCVLAADEEDEGDIALQIHFTLIQAFCCENDIDIVRVGDVQRLAAIVGTGDESGAPVDLHCILISNPNEDAWKDPALEKLSLFCEESRSVNDWVPNITLPE.

The homodimerization stretch occupies residues 43-86; the sequence is VYESAKVLNVDPDNVTFCVLAADEEDEGDIALQIHFTLIQAFCC.

The protein belongs to the GADD45 family. In terms of assembly, undergoes concentration-dependent homodimerization, which is required for growth inhibititory activity and enhances interaction with PCNA. Interacts with GADD45GIP1. Interacts with PCNA.

Functionally, involved in the regulation of growth and apoptosis. Mediates activation of stress-responsive MTK1/MEKK4 MAPKKK. This is Growth arrest and DNA damage-inducible protein GADD45 gamma (GADD45G) from Bos taurus (Bovine).